The primary structure comprises 382 residues: Putative NADPH dehydrogenase C5H10.04 (382 aa).

Positions 28 and 189 each coordinate FMN. The substrate site is built by His189 and Asn192. Residues Arg242 and Arg334 each coordinate FMN. Tyr361 provides a ligand contact to substrate.

Belongs to the NADH:flavin oxidoreductase/NADH oxidase family. As to quaternary structure, homodimer or heterodimer. It depends on FMN as a cofactor.

The catalysed reaction is A + NADPH + H(+) = AH2 + NADP(+). The polypeptide is Putative NADPH dehydrogenase C5H10.04 (Schizosaccharomyces pombe (strain 972 / ATCC 24843) (Fission yeast)).